The primary structure comprises 143 residues: D-aminoacyl-tRNA deacylase (143 aa).

The short motif at 135 to 136 (GP) is the Gly-cisPro motif, important for rejection of L-amino acids element.

Belongs to the DTD family. Homodimer.

The protein resides in the cytoplasm. The catalysed reaction is glycyl-tRNA(Ala) + H2O = tRNA(Ala) + glycine + H(+). It carries out the reaction a D-aminoacyl-tRNA + H2O = a tRNA + a D-alpha-amino acid + H(+). An aminoacyl-tRNA editing enzyme that deacylates mischarged D-aminoacyl-tRNAs. Also deacylates mischarged glycyl-tRNA(Ala), protecting cells against glycine mischarging by AlaRS. Acts via tRNA-based rather than protein-based catalysis; rejects L-amino acids rather than detecting D-amino acids in the active site. By recycling D-aminoacyl-tRNA to D-amino acids and free tRNA molecules, this enzyme counteracts the toxicity associated with the formation of D-aminoacyl-tRNA entities in vivo and helps enforce protein L-homochirality. The chain is D-aminoacyl-tRNA deacylase from Mycolicibacterium gilvum (strain PYR-GCK) (Mycobacterium gilvum (strain PYR-GCK)).